We begin with the raw amino-acid sequence, 306 residues long: tRNA dimethylallyltransferase (306 aa).

An ATP-binding site is contributed by 14–21; it reads GPTAAGKS. 16-21 is a binding site for substrate; that stretch reads TAAGKS. The tract at residues 39 to 42 is interaction with substrate tRNA; the sequence is DSRL.

This sequence belongs to the IPP transferase family. Monomer. The cofactor is Mg(2+).

The catalysed reaction is adenosine(37) in tRNA + dimethylallyl diphosphate = N(6)-dimethylallyladenosine(37) in tRNA + diphosphate. In terms of biological role, catalyzes the transfer of a dimethylallyl group onto the adenine at position 37 in tRNAs that read codons beginning with uridine, leading to the formation of N6-(dimethylallyl)adenosine (i(6)A). This Synechococcus elongatus (strain ATCC 33912 / PCC 7942 / FACHB-805) (Anacystis nidulans R2) protein is tRNA dimethylallyltransferase.